Consider the following 250-residue polypeptide: 2,3-bisphosphoglycerate-dependent phosphoglycerate mutase (250 aa).

Substrate-binding positions include 8–15 (RHGESQWN), 21–22 (TG), Arg60, 87–90 (ERHY), Lys98, 114–115 (RR), and 183–184 (GN). His9 functions as the Tele-phosphohistidine intermediate in the catalytic mechanism. The Proton donor/acceptor role is filled by Glu87.

Belongs to the phosphoglycerate mutase family. BPG-dependent PGAM subfamily. As to quaternary structure, homodimer.

The catalysed reaction is (2R)-2-phosphoglycerate = (2R)-3-phosphoglycerate. It participates in carbohydrate degradation; glycolysis; pyruvate from D-glyceraldehyde 3-phosphate: step 3/5. Catalyzes the interconversion of 2-phosphoglycerate and 3-phosphoglycerate. The chain is 2,3-bisphosphoglycerate-dependent phosphoglycerate mutase from Bordetella pertussis (strain Tohama I / ATCC BAA-589 / NCTC 13251).